A 311-amino-acid polypeptide reads, in one-letter code: Interleukin-20 receptor subunit beta (311 aa).

Positions 1–29 (MQTFTMVLEEIWTSLFMWFFYALIPCLLT) are cleaved as a signal peptide. The Extracellular portion of the chain corresponds to 30 to 233 (DEVAILPAPQ…VEVQGEAIPL (204 aa)). 2 Fibronectin type-III domains span residues 37 to 136 (APQN…RNST) and 144 to 228 (EITK…EVQG). Residue Asn40 is glycosylated (N-linked (GlcNAc...) asparagine). A disulfide bridge connects residues Cys89 and Cys97. Asn134 is a glycosylation site (N-linked (GlcNAc...) asparagine). An intrachain disulfide couples Cys202 to Cys223. The chain crosses the membrane as a helical span at residues 234–254 (VLALFAFVGFMLILVVVPLFV). Topologically, residues 255–311 (WKMGRLLQYSCCPVVVLPDTLKITNSPQKLISCRREEVDACATAVMSPEELLRAWIS) are cytoplasmic.

This sequence belongs to the type II cytokine receptor family. As to quaternary structure, heterodimer with IL20RA and heterodimer with IL22RA1. As to expression, widely expressed with highest levels in skin and testis. Highly expressed in psoriatic skin.

It localises to the membrane. The IL20RA/IL20RB dimer is a receptor for IL19, IL20 and IL24. The IL22RA1/IL20RB dimer is a receptor for IL20 and IL24. This chain is Interleukin-20 receptor subunit beta (IL20RB), found in Homo sapiens (Human).